The primary structure comprises 469 residues: Phenolic glucoside malonyltransferase 1 (469 aa).

Met-1 carries the post-translational modification N-acetylmethionine. The active-site Proton acceptor is the His-169. The HXXXD motif motif lies at 169 to 173; it reads HAVLD. Malonyl-CoA is bound at residue 291–292; the sequence is ST. Residue Asp-413 is the Proton acceptor of the active site. Residues 413-417 carry the DFGWG motif motif; sequence DFGWG.

This sequence belongs to the plant acyltransferase family. Phenolic glucoside malonyltransferase subfamily.

The catalysed reaction is a flavonol 3-O-beta-D-glucoside + malonyl-CoA = a flavonol 3-O-(6-O-malonyl-beta-D-glucoside) + CoA. It catalyses the reaction a flavonol 7-O-beta-D-glucoside + malonyl-CoA = a flavonol 7-O-(6-O-malonyl-beta-D-glucoside) + CoA. Malonyltransferase acting on xenobiotic glucosides. Has activity toward 2-Naphthol glucoside (2NAG), 1-Naphthol glucoside (1NAG), kaempferol 7-O-glucoside, kaempferol 3-O-glucoside, hydroxycoumarin glucosides, phenol-glucosides and isoflavone glucoside (daidzin), but not toward 4-coumaroyl glucoside, kaempferol 3,7-O-diglucoside, salicylic acid glucoside and phlorizin. In vivo, seems to be involved in the malonylation of 2-Naphthol glucoside while PMAT2 would be involved in the malonylation of 4-methylumbelliferone glucoside or 4-nitrophenyl glucoside. This is Phenolic glucoside malonyltransferase 1 (PMAT1) from Arabidopsis thaliana (Mouse-ear cress).